Here is a 436-residue protein sequence, read N- to C-terminus: Probable D-serine dehydratase (436 aa).

At Lys111 the chain carries N6-(pyridoxal phosphate)lysine.

This sequence belongs to the serine/threonine dehydratase family. DsdA subfamily. The cofactor is pyridoxal 5'-phosphate.

It catalyses the reaction D-serine = pyruvate + NH4(+). The protein is Probable D-serine dehydratase of Lactiplantibacillus plantarum (strain ATCC BAA-793 / NCIMB 8826 / WCFS1) (Lactobacillus plantarum).